The sequence spans 367 residues: Large ribosomal subunit protein mL38 (367 aa).

The transit peptide at 1-29 (MLRRSIHTTKILQKPNATSHIWSDFTTRP) directs the protein to the mitochondrion.

It belongs to the phosphatidylethanolamine-binding protein family. Mitochondrion-specific ribosomal protein mL38 subfamily. As to quaternary structure, component of the mitochondrial large ribosomal subunit (mt-LSU). Mature yeast 74S mitochondrial ribosomes consist of a small (37S) and a large (54S) subunit. The 37S small subunit contains a 15S ribosomal RNA (15S mt-rRNA) and 34 different proteins. The 54S large subunit contains a 21S rRNA (21S mt-rRNA) and 46 different proteins.

The protein localises to the mitochondrion. In terms of biological role, component of the mitochondrial ribosome (mitoribosome), a dedicated translation machinery responsible for the synthesis of mitochondrial genome-encoded proteins, including at least some of the essential transmembrane subunits of the mitochondrial respiratory chain. The mitoribosomes are attached to the mitochondrial inner membrane and translation products are cotranslationally integrated into the membrane. This is Large ribosomal subunit protein mL38 (MRPL35) from Saccharomyces cerevisiae (strain ATCC 204508 / S288c) (Baker's yeast).